Here is an 882-residue protein sequence, read N- to C-terminus: Translation initiation factor IF-2 (882 aa).

Disordered stretches follow at residues 95 to 176 (PSVT…ASSL) and 229 to 289 (EHAR…SALQ). A compositionally biased stretch (polar residues) spans 116–133 (TKNTFSQESLNKTSPQKS). Composition is skewed to basic and acidic residues over residues 137–172 (KAIEKAKIESPKKERHSLKEKQKKEAQSEKARREAE) and 229–246 (EHARAAEDENDAKVEGDR). A compositionally biased stretch (basic residues) spans 247–262 (RSRHRGTKTTKQKKTN). The segment covering 263–276 (KLSESKTDREEARA) has biased composition (basic and acidic residues). One can recognise a tr-type G domain in the interval 382 to 551 (HRAPVVTIMG…LLQAEVLELK (170 aa)). The G1 stretch occupies residues 391–398 (GHVDHGKT). 391 to 398 (GHVDHGKT) is a binding site for GTP. Residues 416–420 (GITQH) are G2. A G3 region spans residues 437–440 (DTPG). GTP-binding positions include 437-441 (DTPGH) and 491-494 (NKID). The tract at residues 491–494 (NKID) is G4. Residues 527-529 (SAK) are G5.

This sequence belongs to the TRAFAC class translation factor GTPase superfamily. Classic translation factor GTPase family. IF-2 subfamily.

The protein localises to the cytoplasm. One of the essential components for the initiation of protein synthesis. Protects formylmethionyl-tRNA from spontaneous hydrolysis and promotes its binding to the 30S ribosomal subunits. Also involved in the hydrolysis of GTP during the formation of the 70S ribosomal complex. The protein is Translation initiation factor IF-2 of Hamiltonella defensa subsp. Acyrthosiphon pisum (strain 5AT).